Consider the following 181-residue polypeptide: c-Myc-binding protein homolog (181 aa).

Positions Glu111 to Asn127 are enriched in low complexity. 2 disordered regions span residues Glu111 to Ile145 and Val159 to Glu181. Positions Pro168 to Glu181 are enriched in polar residues.

This sequence belongs to the AMY1 family.

The protein resides in the nucleus. The sequence is that of c-Myc-binding protein homolog from Drosophila melanogaster (Fruit fly).